A 188-amino-acid chain; its full sequence is GTPase KRas (188 aa).

M1 carries the N-acetylmethionine modification. The residue at position 2 (T2) is an N-acetylthreonine; in GTPase KRas, N-terminally processed. GTP contacts are provided by residues 10–18 (GAGGVGKSA), 29–35 (VDEYDPT), and 59–60 (AG). The short motif at 32–40 (YDPTIEDSY) is the Effector region element. Residue K104 is modified to N6-acetyllysine. 116-119 (NKCD) is a GTP binding site. The tract at residues 166-185 (HKEKMSKDGKKKKKKSKTKC) is hypervariable region. Positions 167-188 (KEKMSKDGKKKKKKSKTKCIIM) are disordered. C185 carries the cysteine methyl ester modification. C185 is lipidated: S-farnesyl cysteine. The propeptide at 186-188 (IIM) is removed in mature form.

This sequence belongs to the small GTPase superfamily. Ras family. As to quaternary structure, interacts with PHLPP. Interacts (active GTP-bound form preferentially) with RGS14. Interacts (when farnesylated) with PDE6D; this promotes dissociation from the cell membrane. Interacts with SOS1. Interacts (when farnesylated) with GPR31. Interacts with RAP1GDS1. Interacts (active GTP-bound form) with both SHOC2 and PP1c (all isoforms) to form a tertiary complex; SHOC2 and PP1c preferably bind M-Ras/MRAS, but they also bind K-Ras/KRAS, N-Ras/NRAS and H-Ras/HRAS. Interacts (GTP-bound form) with MAPKAP1/SIN1; inhibiting K-Ras/KRAS activity. Acetylation at Lys-104 prevents interaction with guanine nucleotide exchange factors (GEFs).

Its subcellular location is the cell membrane. It is found in the cytoplasm. The protein localises to the cytosol. The enzyme catalyses GTP + H2O = GDP + phosphate + H(+). With respect to regulation, alternates between an inactive form bound to GDP and an active form bound to GTP. Activated by a guanine nucleotide-exchange factor (GEF) and inactivated by a GTPase-activating protein (GAP). Interaction with SOS1 promotes exchange of bound GDP to GTP. Ras proteins bind GDP/GTP and possess intrinsic GTPase activity. Plays an important role in the regulation of cell proliferation. Plays a role in promoting oncogenic events by inducing transcriptional silencing of tumor suppressor genes (TSGs) in colorectal cancer (CRC) cells in a ZNF304-dependent manner. This chain is GTPase KRas (KRAS), found in Monodelphis domestica (Gray short-tailed opossum).